The chain runs to 290 residues: 4-hydroxybenzoate octaprenyltransferase (290 aa).

8 consecutive transmembrane segments (helical) span residues 23–43 (IGAL…TPGV), 46–66 (LWIL…GCVV), 99–119 (LFVV…TMTI), 141–161 (LPQV…FAAV), 163–183 (ESVP…AVAY), 213–233 (LIIG…GELN), 234–254 (GLGW…VYQQ), and 268–288 (AFMN…MSYW).

Belongs to the UbiA prenyltransferase family. Mg(2+) serves as cofactor.

The protein localises to the cell inner membrane. It carries out the reaction all-trans-octaprenyl diphosphate + 4-hydroxybenzoate = 4-hydroxy-3-(all-trans-octaprenyl)benzoate + diphosphate. Its pathway is cofactor biosynthesis; ubiquinone biosynthesis. In terms of biological role, catalyzes the prenylation of para-hydroxybenzoate (PHB) with an all-trans polyprenyl group. Mediates the second step in the final reaction sequence of ubiquinone-8 (UQ-8) biosynthesis, which is the condensation of the polyisoprenoid side chain with PHB, generating the first membrane-bound Q intermediate 3-octaprenyl-4-hydroxybenzoate. This is 4-hydroxybenzoate octaprenyltransferase from Escherichia coli (strain SE11).